A 107-amino-acid polypeptide reads, in one-letter code: Small polypeptide DEVIL 9 (107 aa).

The segment covering 1–12 has biased composition (basic and acidic residues); that stretch reads MDEKWRLSKKDA. A disordered region spans residues 1 to 79; the sequence is MDEKWRLSKK…EKGSITQKYS (79 aa). A helical membrane pass occupies residues 9-29; that stretch reads KKDALAASCSSSSTSSKSKFS. The segment covering 13–65 has biased composition (low complexity); that stretch reads LAASCSSSSTSSKSKFSRSFSTSASSSKAPAFVRSSSTKCSVPSSSSSSISRS. The required for DVL/RTFL small polypeptide activity stretch occupies residues 73–104; sequence SITQKYSSLAKEQKGRFYIMRRCVAMLVCWHK.

Belongs to the DVL/RTFL small polypeptides family.

The protein localises to the cell membrane. Its function is as follows. Small polypeptide acting as a regulatory molecule which coordinates cellular responses required for differentiation, growth and development, probably by restricting polar cell proliferation in lateral organs and coordinating socket cell recruitment and differentiation at trichome sites. The chain is Small polypeptide DEVIL 9 from Arabidopsis thaliana (Mouse-ear cress).